The following is a 335-amino-acid chain: Lipoyl synthase (335 aa).

Residues Cys-55, Cys-60, Cys-66, Cys-81, Cys-85, Cys-88, and Ser-292 each coordinate [4Fe-4S] cluster. Positions 67–281 (WEDREATFLI…SQRAEEIGFQ (215 aa)) constitute a Radical SAM core domain.

The protein belongs to the radical SAM superfamily. Lipoyl synthase family. Requires [4Fe-4S] cluster as cofactor.

It localises to the cytoplasm. It catalyses the reaction [[Fe-S] cluster scaffold protein carrying a second [4Fe-4S](2+) cluster] + N(6)-octanoyl-L-lysyl-[protein] + 2 oxidized [2Fe-2S]-[ferredoxin] + 2 S-adenosyl-L-methionine + 4 H(+) = [[Fe-S] cluster scaffold protein] + N(6)-[(R)-dihydrolipoyl]-L-lysyl-[protein] + 4 Fe(3+) + 2 hydrogen sulfide + 2 5'-deoxyadenosine + 2 L-methionine + 2 reduced [2Fe-2S]-[ferredoxin]. It functions in the pathway protein modification; protein lipoylation via endogenous pathway; protein N(6)-(lipoyl)lysine from octanoyl-[acyl-carrier-protein]: step 2/2. In terms of biological role, catalyzes the radical-mediated insertion of two sulfur atoms into the C-6 and C-8 positions of the octanoyl moiety bound to the lipoyl domains of lipoate-dependent enzymes, thereby converting the octanoylated domains into lipoylated derivatives. The protein is Lipoyl synthase of Micrococcus luteus (strain ATCC 4698 / DSM 20030 / JCM 1464 / CCM 169 / CCUG 5858 / IAM 1056 / NBRC 3333 / NCIMB 9278 / NCTC 2665 / VKM Ac-2230) (Micrococcus lysodeikticus).